We begin with the raw amino-acid sequence, 348 residues long: Acetylesterase (348 aa).

Residues 1-16 form the signal peptide; it reads MRSILVIPSFVAVLNA. Asparagine 64, asparagine 165, asparagine 218, asparagine 223, and asparagine 297 each carry an N-linked (GlcNAc...) asparagine glycan.

Belongs to the carbohydrate esterase CE16 family. N-glycosylated.

It localises to the secreted. It catalyses the reaction an acetyl ester + H2O = an aliphatic alcohol + acetate + H(+). Acetylesterase that acts as an exo-deacetylase. Shows activity towards naphtyl acetate, triacetin, as well as towards glucose- and xylose acetates. Liberates acetic acid from xylo-oligomers. The chain is Acetylesterase from Hypocrea jecorina (Trichoderma reesei).